The chain runs to 308 residues: F-actin-capping protein subunit alpha (308 aa).

This sequence belongs to the F-actin-capping protein alpha subunit family. Component of the F-actin capping complex, composed of a heterodimer of an alpha and a beta subunit.

Functionally, F-actin-capping proteins bind in a Ca(2+)-independent manner to the fast growing ends of actin filaments (barbed end) thereby blocking the exchange of subunits at these ends. Unlike other capping proteins (such as gelsolin and severin), these proteins do not sever actin filaments. This chain is F-actin-capping protein subunit alpha, found in Arabidopsis thaliana (Mouse-ear cress).